The primary structure comprises 238 residues: End-binding protein 1 (238 aa).

In terms of domain architecture, Calponin-homology (CH) spans 15 to 117; sequence FVGRVSLLKW…FFQWFKWFFD (103 aa). The interval 101-238 is interaction with aurora kinase; the sequence is KYMDNFEFFQ…EDILYAEYHQ (138 aa). Positions 124-165 are enriched in polar residues; it reads KSGATESGSANAVTKTSKPGNRSGSTAASMQNPKASSTSGPS. Residues 124 to 169 form a disordered region; sequence KSGATESGSANAVTKTSKPGNRSGSTAASMQNPKASSTSGPSIDSK. Phosphoserine is present on serine 148. The 83-residue stretch at 156-238 folds into the EB1 C-terminal domain; that stretch reads PKASSTSGPS…EDILYAEYHQ (83 aa).

This sequence belongs to the MAPRE family. As to quaternary structure, homodimer; disulfide-linked and via interaction of the C-terminal EB1-specific domains. Interacts with BOP1 (via C-terminal WD repeats). Interacts with giardin subunit gamma, neurogenic locus notch homolog protein, GL50803_8358 and GL50803_11327. Interacts (via C-terminal residues 101-238) with aurora kinase. Interacts with tubulin gamma chain. Post-translationally, phosphorylated in vitro by aurora kinase. Phosphorylation is important for cell division.

It localises to the nucleus membrane. It is found in the cytoplasm. The protein resides in the cytoskeleton. Its subcellular location is the spindle. The protein localises to the nucleus envelope. It localises to the flagellum axoneme. It is found in the cell projection. The protein resides in the cilium. Its subcellular location is the flagellum. In terms of biological role, involved in cell division. Involved in mitosis. Regulates dynamics of microtubules (MTs) during mitosis. Required for cytokinesis. Binds polymerized MTs in vitro. Is able to rescue a mitotic division defect, the proper positioning of the nucleus, of the S.cerevisiae BIM1 knockout mutant in a complementation assay. May play a role in spindle positioning and MT distribution. May be involved in MT nucleation for the formation of median bodies and in the biogenesis of flagella. Based on its localization to both the flagellar exit point and the distal flagellar tips, it may mediate the transition from anterograde to retrograde intraflagellar transport (IFT). This chain is End-binding protein 1, found in Giardia intestinalis (strain ATCC 50803 / WB clone C6) (Giardia lamblia).